The primary structure comprises 224 residues: 25 kDa integral membrane protein (224 aa).

Over 1-12 (MKLSFTKVSLTN) the chain is Cytoplasmic. Residues 13 to 33 (ILILFNCLFIIFSMIVLTFGV) form a helical membrane-spanning segment. Topologically, residues 34–52 (IPQIYLLKFANILHGVRPS) are extracellular. A helical transmembrane segment spans residues 53–73 (IFPIVCFTGSFVIIVACVGII). Residues 74–80 (GLMKGGK) lie on the Cytoplasmic side of the membrane. A helical transmembrane segment spans residues 81-101 (CLLTMHIIALIIATIIDISTA). Residues 102 to 189 (TLSAIKQNEF…LNKYVRYYID (88 aa)) are Extracellular-facing. A glycan (N-linked (GlcNAc...) asparagine) is linked at asparagine 120. A helical transmembrane segment spans residues 190–210 (ILIYLCFIFGFIKLIYSLFTF). Residues 211-224 (TQRQRIFSEKTPVA) lie on the Cytoplasmic side of the membrane.

The protein belongs to the tetraspanin (TM4SF) family.

The protein resides in the membrane. This Schistosoma japonicum (Blood fluke) protein is 25 kDa integral membrane protein.